The following is a 444-amino-acid chain: C4-dicarboxylate transport protein (444 aa).

The next 9 helical transmembrane spans lie at 15-35 (VIVAICIGIALGHYYPQFGVA), 46-66 (LIKMIIAPIIFCTVVSGIAGM), 78-98 (YALLYFEIVSTIALLVGLIVV), 143-163 (IVGAFATGDILQVLMFSVIFG), 199-219 (PIGAFGAMAFTIGAYGVGSLV), 224-244 (LMICFYITCLAFILIVLGGIA), 291-311 (VVGLVIPTGYSFNLDGTAIYL), 332-352 (ITLLVVLLLSSKGAAGVTGSG), and 354-374 (IVLAATLSAVGHLPVAGLALI). A disordered region spans residues 422 to 444 (GIADTRPEDDLGVAEGPTPSNVK).

It belongs to the dicarboxylate/amino acid:cation symporter (DAACS) (TC 2.A.23) family.

It localises to the cell inner membrane. Functionally, responsible for the transport of dicarboxylates such as succinate, fumarate, and malate from the periplasm across the membrane. The sequence is that of C4-dicarboxylate transport protein from Pseudomonas fluorescens (strain Pf0-1).